Reading from the N-terminus, the 266-residue chain is ES1 protein homolog, mitochondrial (266 aa).

The N-terminal 39 residues, methionine 1–proline 39, are a transit peptide targeting the mitochondrion. N6-acetyllysine occurs at positions 149, 155, and 162. At lysine 201 the chain carries N6-acetyllysine; alternate. N6-succinyllysine; alternate is present on lysine 201. Lysine 217 is modified (N6-acetyllysine). 2 positions are modified to N6-acetyllysine; alternate: lysine 221 and lysine 231. An N6-succinyllysine; alternate mark is found at lysine 221 and lysine 231.

Belongs to the ES1 family.

Its subcellular location is the mitochondrion. This Rattus norvegicus (Rat) protein is ES1 protein homolog, mitochondrial.